We begin with the raw amino-acid sequence, 138 residues long: Basic phospholipase A2 RV-4 (138 aa).

Positions 1–16 are cleaved as a signal peptide; it reads MRTLWIVAVCLIGVEG. 7 cysteine pairs are disulfide-bonded: Cys42-Cys131, Cys44-Cys60, Cys59-Cys111, Cys65-Cys138, Cys66-Cys104, Cys73-Cys97, and Cys91-Cys102. Ca(2+) is bound by residues Tyr43, Gly45, and Gly47. His63 is an active-site residue. Ca(2+) is bound at residue Asp64. Residue Asp105 is part of the active site.

This sequence belongs to the phospholipase A2 family. Group II subfamily. D49 sub-subfamily. Heterodimer of a weakly toxic basic protein having phospholipase A2 activity (RV-4) and a non-toxic acidic protein which inhibits its enzymatic activity but potentiates its lethal potency and neurotoxicity (RV-7). Ca(2+) is required as a cofactor. In terms of tissue distribution, expressed by the venom gland.

Its subcellular location is the secreted. The enzyme catalyses a 1,2-diacyl-sn-glycero-3-phosphocholine + H2O = a 1-acyl-sn-glycero-3-phosphocholine + a fatty acid + H(+). Heterodimer RV-4/RV-7: acts as a presynaptic neurotoxin. Its function is as follows. Monomer: snake venom phospholipase A2 (PLA2) that acts as a presynaptic neurotoxin. PLA2 catalyzes the calcium-dependent hydrolysis of the 2-acyl groups in 3-sn-phosphoglycerides. The chain is Basic phospholipase A2 RV-4 from Daboia siamensis (Eastern Russel's viper).